Reading from the N-terminus, the 546-residue chain is Hydroxylamine reductase (546 aa).

4 residues coordinate [4Fe-4S] cluster: C3, C6, C18, and C25. 8 residues coordinate hybrid [4Fe-2O-2S] cluster: H245, E269, C313, C401, C429, C454, E488, and K490. A Cysteine persulfide modification is found at C401.

The protein belongs to the HCP family. [4Fe-4S] cluster is required as a cofactor. Hybrid [4Fe-2O-2S] cluster serves as cofactor.

It is found in the cytoplasm. The catalysed reaction is A + NH4(+) + H2O = hydroxylamine + AH2 + H(+). Inhibited by cyanide and by sulfide and iron reagents such as dithioerythritol, 2,2'-dipyridyl and o-phenanthroline. In terms of biological role, could be involved in assimilation and/or detoxification of hydroxylamine, which is a toxic compound that may be formed during nitrate/nitrite assimilation. Catalyzes the reduction of hydroxylamine to form NH(3) and H(2)O. It has a low reductase activity with FAD, FMN, benzyl viologen and bromphenol blue as electrons donors, but it is not able to use NAD or NADP. The protein is Hydroxylamine reductase of Rhodobacter capsulatus (Rhodopseudomonas capsulata).